We begin with the raw amino-acid sequence, 369 residues long: Glycolate oxidase (369 aa).

At M1 the chain carries N-acetylmethionine. Positions 1–359 (MEITNVNEYE…SRSHIAADWD (359 aa)) constitute an FMN hydroxy acid dehydrogenase domain. A glyoxylate-binding site is contributed by Y24. FMN contacts are provided by residues 77–79 (PTA), S106, 127–129 (QLY), and T155. Y129 contributes to the glyoxylate binding site. R164 provides a ligand contact to glyoxylate. FMN contacts are provided by K230 and S252. Glyoxylate is bound by residues H254 and R257. Catalysis depends on H254, which acts as the Proton acceptor. FMN-binding positions include 285-289 (DGGVR) and 308-309 (GR). Positions 367-369 (ARL) match the Microbody targeting signal motif.

Belongs to the FMN-dependent alpha-hydroxy acid dehydrogenase family. Homotetramer. It depends on FMN as a cofactor.

Its subcellular location is the peroxisome. The catalysed reaction is glycolate + O2 = glyoxylate + H2O2. It catalyses the reaction a (2S)-2-hydroxycarboxylate + O2 = a 2-oxocarboxylate + H2O2. It participates in photosynthesis; photorespiration; glycine from 2-phosphoglycolate: step 2/3. Functionally, catalyzes the oxidation of glycolate to glyoxylate, with a reduction of O2 to H2O2. Is a key enzyme in photorespiration in green plants. To a lesser extent, is also able to use L-lactate and 2-hydroxbyutanoate as substrate in vitro, but shows almost no activity with L-mandelate. This Spinacia oleracea (Spinach) protein is Glycolate oxidase.